Consider the following 464-residue polypeptide: Phospho-cellobiase (464 aa).

The active-site Proton donor is the Glu172. The active-site Nucleophile is Glu361.

This sequence belongs to the glycosyl hydrolase 1 family.

The polypeptide is Phospho-cellobiase (casB) (Klebsiella oxytoca).